A 398-amino-acid chain; its full sequence is Ornithine aminotransferase (398 aa).

Lys-255 bears the N6-(pyridoxal phosphate)lysine mark.

The protein belongs to the class-III pyridoxal-phosphate-dependent aminotransferase family. OAT subfamily. Requires pyridoxal 5'-phosphate as cofactor.

The protein localises to the cytoplasm. It carries out the reaction a 2-oxocarboxylate + L-ornithine = L-glutamate 5-semialdehyde + an L-alpha-amino acid. Its pathway is amino-acid biosynthesis; L-proline biosynthesis; L-glutamate 5-semialdehyde from L-ornithine: step 1/1. In terms of biological role, catalyzes the interconversion of ornithine to glutamate semialdehyde. The polypeptide is Ornithine aminotransferase (Geobacillus sp. (strain WCH70)).